A 265-amino-acid polypeptide reads, in one-letter code: 4-hydroxy-tetrahydrodipicolinate reductase (265 aa).

NAD(+) is bound by residues Gly-7–Met-12 and Asp-33. Arg-34 serves as a coordination point for NADP(+). Residues Gly-96–Thr-98 and Ala-120–Met-123 contribute to the NAD(+) site. Catalysis depends on His-153, which acts as the Proton donor/acceptor. His-154 serves as a coordination point for (S)-2,3,4,5-tetrahydrodipicolinate. Lys-157 serves as the catalytic Proton donor. Residue Gly-163–Thr-164 coordinates (S)-2,3,4,5-tetrahydrodipicolinate.

It belongs to the DapB family.

The protein resides in the cytoplasm. The catalysed reaction is (S)-2,3,4,5-tetrahydrodipicolinate + NAD(+) + H2O = (2S,4S)-4-hydroxy-2,3,4,5-tetrahydrodipicolinate + NADH + H(+). It catalyses the reaction (S)-2,3,4,5-tetrahydrodipicolinate + NADP(+) + H2O = (2S,4S)-4-hydroxy-2,3,4,5-tetrahydrodipicolinate + NADPH + H(+). The protein operates within amino-acid biosynthesis; L-lysine biosynthesis via DAP pathway; (S)-tetrahydrodipicolinate from L-aspartate: step 4/4. Catalyzes the conversion of 4-hydroxy-tetrahydrodipicolinate (HTPA) to tetrahydrodipicolinate. The polypeptide is 4-hydroxy-tetrahydrodipicolinate reductase (Burkholderia multivorans (strain ATCC 17616 / 249)).